The sequence spans 486 residues: Aspartyl/glutamyl-tRNA(Asn/Gln) amidotransferase subunit B (486 aa).

Belongs to the GatB/GatE family. GatB subfamily. In terms of assembly, heterotrimer of A, B and C subunits.

It catalyses the reaction L-glutamyl-tRNA(Gln) + L-glutamine + ATP + H2O = L-glutaminyl-tRNA(Gln) + L-glutamate + ADP + phosphate + H(+). The enzyme catalyses L-aspartyl-tRNA(Asn) + L-glutamine + ATP + H2O = L-asparaginyl-tRNA(Asn) + L-glutamate + ADP + phosphate + 2 H(+). Functionally, allows the formation of correctly charged Asn-tRNA(Asn) or Gln-tRNA(Gln) through the transamidation of misacylated Asp-tRNA(Asn) or Glu-tRNA(Gln) in organisms which lack either or both of asparaginyl-tRNA or glutaminyl-tRNA synthetases. The reaction takes place in the presence of glutamine and ATP through an activated phospho-Asp-tRNA(Asn) or phospho-Glu-tRNA(Gln). In Leptospira borgpetersenii serovar Hardjo-bovis (strain L550), this protein is Aspartyl/glutamyl-tRNA(Asn/Gln) amidotransferase subunit B.